We begin with the raw amino-acid sequence, 334 residues long: MQKKVIAAIIGTSAISAVAATQANAATTHTVKPGESVWAISNKYGISIAKLKSLNNLTSNLIFPNQVLKVSGSSNSTSNSSRPSTNSGGGSYYTVQAGDSLSLIASKYGTTYQNIMRLNGLNNFFIYPGQKLKVSGTASSSNAASNSSRPSTNSGGGSYYTVQAGDSLSLIASKYGTTYQKIMSLNGLNNFFIYPGQKLKVTGNASTNSGSATTTNRGYNTPVFSHQNLYTWGQCTYHVFNRRAEIGKGISTYWWNANNWDNAAAADGYTIDNRPTVGSIAQTDVGYYGHVMFVERVNNDGSILVSEMNYSAAPGILTYRTVPAYQVNNYRYIH.

The N-terminal stretch at 1 to 25 (MQKKVIAAIIGTSAISAVAATQANA) is a signal peptide. Positions 27–70 (TTHTVKPGESVWAISNKYGISIAKLKSLNNLTSNLIFPNQVLKV) constitute a LysM 1 domain. Low complexity predominate over residues 71–86 (SGSSNSTSNSSRPSTN). The disordered stretch occupies residues 71 to 90 (SGSSNSTSNSSRPSTNSGGG). LysM domains lie at 91–134 (SYYT…KLKV) and 158–201 (SYYT…KLKV). The Peptidase C51 domain maps to 210-334 (GSATTTNRGY…YQVNNYRYIH (125 aa)).

Its subcellular location is the secreted. It is found in the cell surface. It carries out the reaction Hydrolyzes the link between N-acetylmuramoyl residues and L-amino acid residues in certain cell-wall glycopeptides.. Peptidoglycan hydrolase involved in the splitting of the septum during cell division. This chain is N-acetylmuramoyl-L-alanine amidase sle1 (sle1), found in Staphylococcus aureus (strain USA300).